The chain runs to 234 residues: Segregation and condensation protein A (234 aa).

This sequence belongs to the ScpA family. As to quaternary structure, component of a cohesin-like complex composed of ScpA, ScpB and the Smc homodimer, in which ScpA and ScpB bind to the head domain of Smc. The presence of the three proteins is required for the association of the complex with DNA.

Its subcellular location is the cytoplasm. Its function is as follows. Participates in chromosomal partition during cell division. May act via the formation of a condensin-like complex containing Smc and ScpB that pull DNA away from mid-cell into both cell halves. The polypeptide is Segregation and condensation protein A (Streptococcus pyogenes serotype M5 (strain Manfredo)).